The chain runs to 432 residues: Diaminopimelate decarboxylase (432 aa).

N6-(pyridoxal phosphate)lysine is present on K66. Pyridoxal 5'-phosphate is bound by residues G248 and 290 to 293; that span reads EPGR. R293, R330, and Y334 together coordinate substrate. The active-site Proton donor is C361. The substrate site is built by E362 and Y390. Y390 is a binding site for pyridoxal 5'-phosphate.

It belongs to the Orn/Lys/Arg decarboxylase class-II family. LysA subfamily. In terms of assembly, homodimer. Requires pyridoxal 5'-phosphate as cofactor.

The enzyme catalyses meso-2,6-diaminopimelate + H(+) = L-lysine + CO2. It participates in amino-acid biosynthesis; L-lysine biosynthesis via DAP pathway; L-lysine from DL-2,6-diaminopimelate: step 1/1. Functionally, specifically catalyzes the decarboxylation of meso-diaminopimelate (meso-DAP) to L-lysine. The chain is Diaminopimelate decarboxylase from Bacillus methanolicus.